A 458-amino-acid polypeptide reads, in one-letter code: ATP synthase subunit beta (458 aa).

148–155 (GGAGVGKT) serves as a coordination point for ATP.

It belongs to the ATPase alpha/beta chains family. As to quaternary structure, F-type ATPases have 2 components, CF(1) - the catalytic core - and CF(0) - the membrane proton channel. CF(1) has five subunits: alpha(3), beta(3), gamma(1), delta(1), epsilon(1). CF(0) has three main subunits: a(1), b(2) and c(9-12). The alpha and beta chains form an alternating ring which encloses part of the gamma chain. CF(1) is attached to CF(0) by a central stalk formed by the gamma and epsilon chains, while a peripheral stalk is formed by the delta and b chains.

It is found in the cell inner membrane. The catalysed reaction is ATP + H2O + 4 H(+)(in) = ADP + phosphate + 5 H(+)(out). Functionally, produces ATP from ADP in the presence of a proton gradient across the membrane. The catalytic sites are hosted primarily by the beta subunits. The polypeptide is ATP synthase subunit beta (Francisella tularensis subsp. tularensis (strain FSC 198)).